The following is a 444-amino-acid chain: Exodeoxyribonuclease 7 large subunit (444 aa).

It belongs to the XseA family. As to quaternary structure, heterooligomer composed of large and small subunits.

It localises to the cytoplasm. The enzyme catalyses Exonucleolytic cleavage in either 5'- to 3'- or 3'- to 5'-direction to yield nucleoside 5'-phosphates.. Bidirectionally degrades single-stranded DNA into large acid-insoluble oligonucleotides, which are then degraded further into small acid-soluble oligonucleotides. The sequence is that of Exodeoxyribonuclease 7 large subunit from Hahella chejuensis (strain KCTC 2396).